Here is a 523-residue protein sequence, read N- to C-terminus: GMP synthase [glutamine-hydrolyzing] (523 aa).

The 198-residue stretch at 8–205 (KILILDFGSQ…VVNICGCETK (198 aa)) folds into the Glutamine amidotransferase type-1 domain. The active-site Nucleophile is cysteine 85. Active-site residues include histidine 179 and glutamate 181. Residues 206-398 (WTAENIIEDA…LGLPAEMINR (193 aa)) enclose the GMPS ATP-PPase domain. Position 233–239 (233–239 (SGGVDSS)) interacts with ATP.

As to quaternary structure, homodimer.

It catalyses the reaction XMP + L-glutamine + ATP + H2O = GMP + L-glutamate + AMP + diphosphate + 2 H(+). Its pathway is purine metabolism; GMP biosynthesis; GMP from XMP (L-Gln route): step 1/1. In terms of biological role, catalyzes the synthesis of GMP from XMP. In Haemophilus influenzae (strain ATCC 51907 / DSM 11121 / KW20 / Rd), this protein is GMP synthase [glutamine-hydrolyzing] (guaA).